The following is a 61-amino-acid chain: Short neurotoxin 1 (61 aa).

Cystine bridges form between C3–C23, C17–C40, C42–C53, and C54–C59.

This sequence belongs to the three-finger toxin family. Short-chain subfamily. Type I alpha-neurotoxin sub-subfamily. As to expression, expressed by the venom gland.

The protein resides in the secreted. Functionally, binds to muscle nicotinic acetylcholine receptor (nAChR) and inhibit acetylcholine from binding to the receptor, thereby impairing neuromuscular transmission. The sequence is that of Short neurotoxin 1 from Naja philippinensis (Philippine cobra).